Consider the following 162-residue polypeptide: MTREEKSQVIDFLTAEFKSSLAVVVCDYKGLTHKELETLRKEAKANNTKVQVAKNTLVTVAVKNAELGDIELSGTNIFLWSDDQISACKVADKFASANKEKFAIKSGIIEGQISDASKVNAFAKLPSREELLGMLASVWMGPVRNFTIGLDALRRKKEEEAA.

It belongs to the universal ribosomal protein uL10 family. As to quaternary structure, part of the ribosomal stalk of the 50S ribosomal subunit. The N-terminus interacts with L11 and the large rRNA to form the base of the stalk. The C-terminus forms an elongated spine to which L12 dimers bind in a sequential fashion forming a multimeric L10(L12)X complex.

In terms of biological role, forms part of the ribosomal stalk, playing a central role in the interaction of the ribosome with GTP-bound translation factors. This is Large ribosomal subunit protein uL10 from Aliarcobacter butzleri (strain RM4018) (Arcobacter butzleri).